Here is a 275-residue protein sequence, read N- to C-terminus: Shikimate dehydrogenase (NADP(+)) (275 aa).

Shikimate is bound by residues 15 to 17 and threonine 62; that span reads SKS. Lysine 66 functions as the Proton acceptor in the catalytic mechanism. Glutamate 78 serves as a coordination point for NADP(+). Shikimate is bound by residues asparagine 87 and aspartate 102. Residues 127-131, 151-156, and methionine 215 each bind NADP(+); these read GAGGA and NRTPQK. A shikimate-binding site is contributed by tyrosine 217. Glycine 239 is a binding site for NADP(+).

It belongs to the shikimate dehydrogenase family. Homodimer.

It carries out the reaction shikimate + NADP(+) = 3-dehydroshikimate + NADPH + H(+). Its pathway is metabolic intermediate biosynthesis; chorismate biosynthesis; chorismate from D-erythrose 4-phosphate and phosphoenolpyruvate: step 4/7. Its function is as follows. Involved in the biosynthesis of the chorismate, which leads to the biosynthesis of aromatic amino acids. Catalyzes the reversible NADPH linked reduction of 3-dehydroshikimate (DHSA) to yield shikimate (SA). This Nitrosospira multiformis (strain ATCC 25196 / NCIMB 11849 / C 71) protein is Shikimate dehydrogenase (NADP(+)).